The primary structure comprises 317 residues: Lipoyl synthase (317 aa).

The interval Met-1 to Pro-28 is disordered. Residues Cys-64, Cys-69, Cys-75, Cys-90, Cys-94, Cys-97, and Ser-304 each contribute to the [4Fe-4S] cluster site. The region spanning Phe-76–Arg-293 is the Radical SAM core domain.

Belongs to the radical SAM superfamily. Lipoyl synthase family. [4Fe-4S] cluster is required as a cofactor.

It is found in the cytoplasm. The enzyme catalyses [[Fe-S] cluster scaffold protein carrying a second [4Fe-4S](2+) cluster] + N(6)-octanoyl-L-lysyl-[protein] + 2 oxidized [2Fe-2S]-[ferredoxin] + 2 S-adenosyl-L-methionine + 4 H(+) = [[Fe-S] cluster scaffold protein] + N(6)-[(R)-dihydrolipoyl]-L-lysyl-[protein] + 4 Fe(3+) + 2 hydrogen sulfide + 2 5'-deoxyadenosine + 2 L-methionine + 2 reduced [2Fe-2S]-[ferredoxin]. It functions in the pathway protein modification; protein lipoylation via endogenous pathway; protein N(6)-(lipoyl)lysine from octanoyl-[acyl-carrier-protein]: step 2/2. Functionally, catalyzes the radical-mediated insertion of two sulfur atoms into the C-6 and C-8 positions of the octanoyl moiety bound to the lipoyl domains of lipoate-dependent enzymes, thereby converting the octanoylated domains into lipoylated derivatives. The sequence is that of Lipoyl synthase from Acidithiobacillus ferrooxidans (strain ATCC 23270 / DSM 14882 / CIP 104768 / NCIMB 8455) (Ferrobacillus ferrooxidans (strain ATCC 23270)).